The primary structure comprises 159 residues: Crossover junction endodeoxyribonuclease RuvC (159 aa).

Catalysis depends on residues Asp7, Glu66, and Asp139. Mg(2+)-binding residues include Asp7, Glu66, and Asp139.

It belongs to the RuvC family. In terms of assembly, homodimer which binds Holliday junction (HJ) DNA. The HJ becomes 2-fold symmetrical on binding to RuvC with unstacked arms; it has a different conformation from HJ DNA in complex with RuvA. In the full resolvosome a probable DNA-RuvA(4)-RuvB(12)-RuvC(2) complex forms which resolves the HJ. It depends on Mg(2+) as a cofactor.

The protein resides in the cytoplasm. The catalysed reaction is Endonucleolytic cleavage at a junction such as a reciprocal single-stranded crossover between two homologous DNA duplexes (Holliday junction).. Its function is as follows. The RuvA-RuvB-RuvC complex processes Holliday junction (HJ) DNA during genetic recombination and DNA repair. Endonuclease that resolves HJ intermediates. Cleaves cruciform DNA by making single-stranded nicks across the HJ at symmetrical positions within the homologous arms, yielding a 5'-phosphate and a 3'-hydroxyl group; requires a central core of homology in the junction. The consensus cleavage sequence is 5'-(A/T)TT(C/G)-3'. Cleavage occurs on the 3'-side of the TT dinucleotide at the point of strand exchange. HJ branch migration catalyzed by RuvA-RuvB allows RuvC to scan DNA until it finds its consensus sequence, where it cleaves and resolves the cruciform DNA. The chain is Crossover junction endodeoxyribonuclease RuvC from Sulfurovum sp. (strain NBC37-1).